Here is a 185-residue protein sequence, read N- to C-terminus: MSRLRIYDDTRPESPLLDTQDGAVIAAELQKIGVTFERWQATAPVAPGASQEEVFAAYRADIDRLVAERGFKSVDVASIAPDNPNRAELRKKFLDEHFHKEDEVRFFVAGSGLFTLHVGDKVYEIECVKDDLIAVPDGTTHWFDMGDEPSFVAIRFFTEPDGWVGHFTGTDIAQKFPRYVPTQAS.

Fe(2+) is bound by residues His97, His99, Glu103, and His141. Ni(2+)-binding residues include His97, His99, Glu103, and His141.

Belongs to the acireductone dioxygenase (ARD) family. Monomer. Fe(2+) serves as cofactor. The cofactor is Ni(2+).

The enzyme catalyses 1,2-dihydroxy-5-(methylsulfanyl)pent-1-en-3-one + O2 = 3-(methylsulfanyl)propanoate + CO + formate + 2 H(+). It carries out the reaction 1,2-dihydroxy-5-(methylsulfanyl)pent-1-en-3-one + O2 = 4-methylsulfanyl-2-oxobutanoate + formate + 2 H(+). It participates in amino-acid biosynthesis; L-methionine biosynthesis via salvage pathway; L-methionine from S-methyl-5-thio-alpha-D-ribose 1-phosphate: step 5/6. Its function is as follows. Catalyzes 2 different reactions between oxygen and the acireductone 1,2-dihydroxy-3-keto-5-methylthiopentene (DHK-MTPene) depending upon the metal bound in the active site. Fe-containing acireductone dioxygenase (Fe-ARD) produces formate and 2-keto-4-methylthiobutyrate (KMTB), the alpha-ketoacid precursor of methionine in the methionine recycle pathway. Ni-containing acireductone dioxygenase (Ni-ARD) produces methylthiopropionate, carbon monoxide and formate, and does not lie on the methionine recycle pathway. The polypeptide is Acireductone dioxygenase (Stenotrophomonas maltophilia (strain K279a)).